Reading from the N-terminus, the 247-residue chain is Membrane-spanning 4-domains subfamily A member 6D (247 aa).

Residues 1 to 46 are Cytoplasmic-facing; the sequence is MIPQVVTSETVTVISPNGISFPQTDKPQPSHQSQDSLKKHLKAEIK. Residues 47–67 traverse the membrane as a helical segment; that stretch reads VMAAIQIMCAVMVLSLGIILA. Residues 68-80 are Extracellular-facing; the sequence is SVPSNLHFTSVFS. Residues 81 to 101 traverse the membrane as a helical segment; that stretch reads ILLESGYPFVGALFFAISGIL. Over 102–121 the chain is Cytoplasmic; it reads SIVTEKKMTKPLVHSSLALS. Residues 122-142 form a helical membrane-spanning segment; that stretch reads ILSVLSALTGIAILSVSLAAL. At 143 to 180 the chain is on the extracellular side; it reads EPALQQCKLAFTQLDTTQDAYHFFSPEPLNSCFVAKAA. The chain crosses the membrane as a helical span at residues 181 to 201; that stretch reads LTGVFSLMLISSVLELGLAVL. The Cytoplasmic segment spans residues 202–247; that stretch reads TATLWWKQSSSAFSGNVIFLSQNSKNKSSVSSESLCNPTYENILTS. Phosphoserine is present on Ser235.

This sequence belongs to the MS4A family. In terms of tissue distribution, expressed in thymus, spleen, intestine, colon, testis, heart, liver, brain, kidney, peripheral lymph node and bone marrow.

Its subcellular location is the membrane. Its function is as follows. May be involved in signal transduction as a component of a multimeric receptor complex. In Mus musculus (Mouse), this protein is Membrane-spanning 4-domains subfamily A member 6D (Ms4a6d).